A 264-amino-acid polypeptide reads, in one-letter code: Thiazole synthase (264 aa).

The Schiff-base intermediate with DXP role is filled by Lys98. Residues Gly159, 185–186, and 207–208 contribute to the 1-deoxy-D-xylulose 5-phosphate site; these read AG and AT.

The protein belongs to the ThiG family. In terms of assembly, homotetramer. Forms heterodimers with either ThiH or ThiS.

It localises to the cytoplasm. The catalysed reaction is [ThiS sulfur-carrier protein]-C-terminal-Gly-aminoethanethioate + 2-iminoacetate + 1-deoxy-D-xylulose 5-phosphate = [ThiS sulfur-carrier protein]-C-terminal Gly-Gly + 2-[(2R,5Z)-2-carboxy-4-methylthiazol-5(2H)-ylidene]ethyl phosphate + 2 H2O + H(+). Its pathway is cofactor biosynthesis; thiamine diphosphate biosynthesis. Catalyzes the rearrangement of 1-deoxy-D-xylulose 5-phosphate (DXP) to produce the thiazole phosphate moiety of thiamine. Sulfur is provided by the thiocarboxylate moiety of the carrier protein ThiS. In vitro, sulfur can be provided by H(2)S. The chain is Thiazole synthase from Mycobacterium ulcerans (strain Agy99).